Here is a 451-residue protein sequence, read N- to C-terminus: POU domain, class 3, transcription factor 1 (451 aa).

5 disordered regions span residues 1–21, 69–114, 127–154, 186–253, and 395–451; these read MATT…GTGP, AHPQ…GFHA, AWAQ…HQPQ, GLHH…PSSD, and KRMT…GSVQ. Composition is skewed to gly residues over residues 11–20, 76–85, and 95–112; these read GPGGGAGGTG, TGGGGGGDWA, and AGGG…GGGF. Over residues 190–199 the composition is skewed to basic and acidic residues; that stretch reads ALHEDGHEAQ. Positions 220 to 232 are enriched in low complexity; that stretch reads AGGLHAAAAHLHP. The region spanning 247 to 321 is the POU-specific domain; that stretch reads EDAPSSDDLE…LLNKWLEETD (75 aa). Positions 339-398 form a DNA-binding region, homeobox; it reads KRKKRTSIEVGVKGALESHFLKCPKPSAHEITGLADSLQLEKEVVRVWFCNRRQKEKRMT. The span at 427–436 shows a compositional bias: pro residues; the sequence is PSAPPPPPPA.

It belongs to the POU transcription factor family. Class-3 subfamily. In terms of tissue distribution, expressed in embryonal stem cells and in the developing brain.

The protein localises to the nucleus. Functionally, transcription factor that binds to the octamer motif (5'-ATTTGCAT-3'). Acts as a transcriptional activator when binding cooperatively with SOX4, SOX11, or SOX12 to gene promoters. Acts as a transcriptional repressor of myelin-specific genes. The polypeptide is POU domain, class 3, transcription factor 1 (POU3F1) (Homo sapiens (Human)).